The following is a 184-amino-acid chain: UPF0215 protein MJ1150 (184 aa).

This sequence belongs to the UPF0215 family.

The chain is UPF0215 protein MJ1150 from Methanocaldococcus jannaschii (strain ATCC 43067 / DSM 2661 / JAL-1 / JCM 10045 / NBRC 100440) (Methanococcus jannaschii).